Reading from the N-terminus, the 441-residue chain is MEETQQELTQQLKELETLMAAINLDDSKKKQPIYQNSSESEESETENKNFIYDFSSEEDFEEPVKVKIEEEAETSNKRKFDKNPEFTRFKYQKIPKEYVPAHQTTSTIGVLDIDCVANTEKIIKEWFNHHSILITINEELKNLSSLDTFYYLVYKTRGIAHAYLSNLPSEVLSRIPADRKQVDDWVYNLLLREFVGRLERPESEEAFSQNNYYKLINLEICNMCYLENFLCEFQSRYYGINPIDRENLKVDLLLYAKLPEYVRTQVEAYFNASITSNKLDNTLGGRITALKLWQTEQCNQKLAKRQASVGLCCSKIEDKIGKYGCRKSNPRAKKPKKKFRKIKKYPKKNFWKWNNQRKKKTFRKKRPFRKQQTCPTGKKKCQCWLCHEEGHYANECPKKDNKKAQTLKLIFDLGFEPVESDIETDEELFELTSEDSSEDEY.

The tract at residues 26–63 is disordered; it reads DSKKKQPIYQNSSESEESETENKNFIYDFSSEEDFEEP. Residues 77-79 carry the Nuclear localization signal motif; that stretch reads KRK. The CCHC-type zinc finger occupies 381 to 398; it reads CQCWLCHEEGHYANECPK.

The protein belongs to the caulimoviridae capsid protein family. Interacts (via nuclear localization signal) with host importin alpha.

The protein localises to the virion. The protein resides in the host nucleus. Its function is as follows. Self assembles to form an icosahedral capsid, about 50 nm in diameter, nm, composed of 420 subunits of the viral capsid protein. The capsid encapsulates the genomic dsDNA. Following virus entry into host cell, provides nuclear import of the viral genome. Virus particles do not enter the nucleus, but dock at the nuclear membrane through the interaction with host importins. The sequence is that of Capsid protein from Soybean chlorotic mottle virus.